The sequence spans 132 residues: L-ectoine synthase (132 aa).

This sequence belongs to the ectoine synthase family.

The enzyme catalyses (2S)-4-acetamido-2-aminobutanoate = L-ectoine + H2O. It functions in the pathway amine and polyamine biosynthesis; ectoine biosynthesis; L-ectoine from L-aspartate 4-semialdehyde: step 3/3. Its function is as follows. Catalyzes the circularization of gamma-N-acetyl-alpha,gamma-diaminobutyric acid (ADABA) to ectoine (1,4,5,6-tetrahydro-2-methyl-4-pyrimidine carboxylic acid), which is an excellent osmoprotectant. In Hahella chejuensis (strain KCTC 2396), this protein is L-ectoine synthase.